We begin with the raw amino-acid sequence, 268 residues long: Hydroxyethylthiazole kinase (268 aa).

Met45 is a binding site for substrate. Positions 121 and 167 each coordinate ATP. Gly194 contacts substrate.

Belongs to the Thz kinase family. Mg(2+) is required as a cofactor.

It carries out the reaction 5-(2-hydroxyethyl)-4-methylthiazole + ATP = 4-methyl-5-(2-phosphooxyethyl)-thiazole + ADP + H(+). The protein operates within cofactor biosynthesis; thiamine diphosphate biosynthesis; 4-methyl-5-(2-phosphoethyl)-thiazole from 5-(2-hydroxyethyl)-4-methylthiazole: step 1/1. Catalyzes the phosphorylation of the hydroxyl group of 4-methyl-5-beta-hydroxyethylthiazole (THZ). This chain is Hydroxyethylthiazole kinase, found in Bacillus anthracis (strain A0248).